Consider the following 173-residue polypeptide: Crossover junction endodeoxyribonuclease RuvC (173 aa).

Residues aspartate 8, glutamate 67, and aspartate 139 contribute to the active site. Residues aspartate 8, glutamate 67, and aspartate 139 each contribute to the Mg(2+) site.

This sequence belongs to the RuvC family. Homodimer which binds Holliday junction (HJ) DNA. The HJ becomes 2-fold symmetrical on binding to RuvC with unstacked arms; it has a different conformation from HJ DNA in complex with RuvA. In the full resolvosome a probable DNA-RuvA(4)-RuvB(12)-RuvC(2) complex forms which resolves the HJ. It depends on Mg(2+) as a cofactor.

The protein resides in the cytoplasm. The enzyme catalyses Endonucleolytic cleavage at a junction such as a reciprocal single-stranded crossover between two homologous DNA duplexes (Holliday junction).. Functionally, the RuvA-RuvB-RuvC complex processes Holliday junction (HJ) DNA during genetic recombination and DNA repair. Endonuclease that resolves HJ intermediates. Cleaves cruciform DNA by making single-stranded nicks across the HJ at symmetrical positions within the homologous arms, yielding a 5'-phosphate and a 3'-hydroxyl group; requires a central core of homology in the junction. The consensus cleavage sequence is 5'-(A/T)TT(C/G)-3'. Cleavage occurs on the 3'-side of the TT dinucleotide at the point of strand exchange. HJ branch migration catalyzed by RuvA-RuvB allows RuvC to scan DNA until it finds its consensus sequence, where it cleaves and resolves the cruciform DNA. The sequence is that of Crossover junction endodeoxyribonuclease RuvC from Citrobacter koseri (strain ATCC BAA-895 / CDC 4225-83 / SGSC4696).